A 267-amino-acid chain; its full sequence is Undecaprenyl-diphosphatase (267 aa).

A run of 7 helical transmembrane segments spans residues 4–24 (LYAL…ISST), 41–61 (FWKS…IFVF), 69–89 (LDIW…GLFV), 96–116 (LFNG…FILI), 173–193 (AAEF…AYSI), 207–227 (IPLG…IKFF), and 239–259 (FGIY…SGIL).

This sequence belongs to the UppP family.

The protein resides in the cell inner membrane. It catalyses the reaction di-trans,octa-cis-undecaprenyl diphosphate + H2O = di-trans,octa-cis-undecaprenyl phosphate + phosphate + H(+). Catalyzes the dephosphorylation of undecaprenyl diphosphate (UPP). Confers resistance to bacitracin. This is Undecaprenyl-diphosphatase from Campylobacter jejuni subsp. jejuni serotype O:2 (strain ATCC 700819 / NCTC 11168).